Reading from the N-terminus, the 82-residue chain is RNA-binding protein Hfq (82 aa).

Positions 11-71 (DTFLNSVRKS…ISTIMPAQPV (61 aa)) constitute a Sm domain.

It belongs to the Hfq family. Homohexamer.

Its function is as follows. RNA chaperone that binds small regulatory RNA (sRNAs) and mRNAs to facilitate mRNA translational regulation in response to envelope stress, environmental stress and changes in metabolite concentrations. Also binds with high specificity to tRNAs. This is RNA-binding protein Hfq from Caulobacter sp. (strain K31).